We begin with the raw amino-acid sequence, 283 residues long: Nucleotide-binding protein Sama_3091 (283 aa).

Residue 8–15 (GRSGSGKS) coordinates ATP. 56–59 (DIRN) contributes to the GTP binding site.

Belongs to the RapZ-like family.

Its function is as follows. Displays ATPase and GTPase activities. This chain is Nucleotide-binding protein Sama_3091, found in Shewanella amazonensis (strain ATCC BAA-1098 / SB2B).